The following is a 480-amino-acid chain: Protein nucleotidyltransferase YdiU (480 aa).

The ATP site is built by glycine 86, glycine 88, arginine 89, lysine 109, aspartate 121, glycine 122, arginine 172, and arginine 179. The active-site Proton acceptor is the aspartate 248. Residues asparagine 249 and aspartate 258 each coordinate Mg(2+). Residue aspartate 258 participates in ATP binding.

The protein belongs to the SELO family. Mg(2+) serves as cofactor. The cofactor is Mn(2+).

It carries out the reaction L-seryl-[protein] + ATP = 3-O-(5'-adenylyl)-L-seryl-[protein] + diphosphate. It catalyses the reaction L-threonyl-[protein] + ATP = 3-O-(5'-adenylyl)-L-threonyl-[protein] + diphosphate. The catalysed reaction is L-tyrosyl-[protein] + ATP = O-(5'-adenylyl)-L-tyrosyl-[protein] + diphosphate. The enzyme catalyses L-histidyl-[protein] + UTP = N(tele)-(5'-uridylyl)-L-histidyl-[protein] + diphosphate. It carries out the reaction L-seryl-[protein] + UTP = O-(5'-uridylyl)-L-seryl-[protein] + diphosphate. It catalyses the reaction L-tyrosyl-[protein] + UTP = O-(5'-uridylyl)-L-tyrosyl-[protein] + diphosphate. Functionally, nucleotidyltransferase involved in the post-translational modification of proteins. It can catalyze the addition of adenosine monophosphate (AMP) or uridine monophosphate (UMP) to a protein, resulting in modifications known as AMPylation and UMPylation. The chain is Protein nucleotidyltransferase YdiU from Salmonella paratyphi A (strain ATCC 9150 / SARB42).